The primary structure comprises 357 residues: Peptide chain release factor 1 (357 aa).

Glutamine 236 carries the N5-methylglutamine modification.

The protein belongs to the prokaryotic/mitochondrial release factor family. In terms of processing, methylated by PrmC. Methylation increases the termination efficiency of RF1.

It localises to the cytoplasm. Its function is as follows. Peptide chain release factor 1 directs the termination of translation in response to the peptide chain termination codons UAG and UAA. The sequence is that of Peptide chain release factor 1 from Mycobacterium sp. (strain JLS).